Here is a 223-residue protein sequence, read N- to C-terminus: Adenylate kinase (223 aa).

Residue Gly-17 to Thr-22 participates in ATP binding. Positions Ser-37–Val-66 are NMP. Residues Thr-38, Arg-43, Gly-64–Val-66, Gly-93–Arg-96, and Gln-100 contribute to the AMP site. The tract at residues Gly-134–Asp-171 is LID. ATP is bound by residues Arg-135 and Ser-144–Tyr-145. Positions 168 and 179 each coordinate AMP. Residue Gln-207 participates in ATP binding.

This sequence belongs to the adenylate kinase family. AK2 subfamily. In terms of assembly, monomer.

It localises to the cytoplasm. It is found in the cytosol. The protein resides in the mitochondrion intermembrane space. The catalysed reaction is AMP + ATP = 2 ADP. Its function is as follows. Catalyzes the reversible transfer of the terminal phosphate group between ATP and AMP. Plays an important role in cellular energy homeostasis and in adenine nucleotide metabolism. Adenylate kinase activity is critical for regulation of the phosphate utilization and the AMP de novo biosynthesis pathways. In Vanderwaltozyma polyspora (strain ATCC 22028 / DSM 70294 / BCRC 21397 / CBS 2163 / NBRC 10782 / NRRL Y-8283 / UCD 57-17) (Kluyveromyces polysporus), this protein is Adenylate kinase.